The sequence spans 360 residues: MKATLADKLARADERLEELDALLAQPEVAADMDSYRKLTREHAELSPVVGLYRQYKQVEADQKTAQEMLADADMRELAEAELADGAARITELENELQTALLPRDPNDERNIFLEIRAGTGGDESALFAGNLLRMYTRYAERQRWKVEIVSESPGEVGGYKEVIVRIVGEGAYSRLKFESGGHRVQRVPETESQGRIHTSACTVAVMPEAAEVGEVDINPADLRIDTFRASGAGGQHINKTDSAVRITHLPTGLVVECQDDRSQHRNRAQAMSVLAARLKDREIQAQQASEASTRKSLIGSGDRSDRIRTYNFPQGRITDHRINLTLYKIDAVMDGDLGELLDALAAEHQAAQLATLSGEG.

Gln235 bears the N5-methylglutamine mark. Polar residues predominate over residues 285–295 (AQQASEASTRK). The segment at 285–305 (AQQASEASTRKSLIGSGDRSD) is disordered.

It belongs to the prokaryotic/mitochondrial release factor family. Methylated by PrmC. Methylation increases the termination efficiency of RF1.

It localises to the cytoplasm. In terms of biological role, peptide chain release factor 1 directs the termination of translation in response to the peptide chain termination codons UAG and UAA. The sequence is that of Peptide chain release factor 1 from Thiobacillus denitrificans (strain ATCC 25259 / T1).